A 536-amino-acid chain; its full sequence is Cytoplasmic dynein 2 intermediate chain 2 (536 aa).

At Ser-15 the chain carries Phosphoserine. The DYNLL2 binding stretch occupies residues 80–93 (RNHVDAQVQTEAPV). The interval 106-131 (PRLAAFLRRVEAMVIRELNKNWQSHA) is DYNLRB1 binding. 5 WD repeats span residues 215–255 (EVPS…DPLL), 264–308 (THTD…QLQL), 390–430 (PHGG…PLTS), 433–473 (LSLK…QKPT), and 480–520 (QDES…TEQG).

This sequence belongs to the dynein light intermediate chain family. In terms of assembly, the cytoplasmic dynein 2 complex consists of two catalytic heavy chains (HCs) and a number of non-catalytic subunits presented by intermediate chains (ICs), light intermediate chains (LICs) and light chains (LCs). Among them, a heavy chain (DYNC2H1), two intermediate chains (DYNC2I2 and DYNC2I1), a light intermediate chain (DYNC2LI1), and a light chain (DYNLT2B) are unique to the cytoplasmic dynein complex 2, but a subset of the light chains are also shared by dynein-1 and dynein-2 complexes. Interacts with DYNC2I1; their C-terminal domains each bind a copy of the heavy chain, and their extended N-terminal regions are held together by an array of light chain dimers. Interacts with DYNLL2; this interaction is essential for dynein-2-mediated retrograde trafficking of ciliary proteins. Interacts with DYNLRB1; this interaction is essential for dynein-2-mediated retrograde trafficking of ciliary proteins. Interacts (via the WD domains) with MAP3K7 and TAB3. Interacts (via WD domains) with TAB2 (via C-terminus). Interacts (via WD domains) with TRAF6 (via TRAF-type domains). As to expression, expressed in several cell lines (at protein level).

It is found in the cytoplasm. The protein localises to the cytoskeleton. Its subcellular location is the cilium basal body. The protein resides in the cilium axoneme. It localises to the microtubule organizing center. It is found in the centrosome. The protein localises to the cell projection. Its subcellular location is the cilium. The protein resides in the filopodium. In terms of biological role, acts as one of several non-catalytic accessory components of the cytoplasmic dynein 2 complex (dynein-2 complex), a motor protein complex that drives the movement of cargos along microtubules within cilia and flagella in concert with the intraflagellar transport (IFT) system. DYNC2I2 plays a major role in retrograde ciliary protein trafficking and in ciliogenesis. Required also to maintain a functional transition zone. Its function is as follows. Acts as a negative regulator of the Toll-like and IL-1R receptor signaling pathways. Inhibits the MAP3K7-induced NF-kappa-B activation pathway. Inhibits MAP3K7 phosphorylation at 'Thr-184' and 'Thr-187' upon Il-1 beta stimulation. This chain is Cytoplasmic dynein 2 intermediate chain 2, found in Homo sapiens (Human).